The following is a 100-amino-acid chain: U-myrmeciitoxin(01)-Mg7c (100 aa).

The signal sequence occupies residues 1–17 (MKLSYLSLALAIILVLA). The propeptide occupies 18–50 (IVYSPHMEVKALADAEPDAIGFADAFGEADAEP). Serine 85 is a glycosylation site (O-linked (GalNAc...) serine). 2 O-linked (GalNAc...) threonine glycosylation sites follow: threonine 94 and threonine 95.

Belongs to the formicidae venom precursor-01 superfamily. In terms of processing, glycosylation is critical to maintaining the aqueous solubility of this protein, but does not directly contribute to its activity. As to expression, expressed by the venom gland.

The protein resides in the secreted. It localises to the target cell membrane. Functionally, neurotoxin that triggers pain behavior and inflammation in mammals, and is paralytic and lethal to insects. Causes a time-dependent increase in cell leak current. May act by targeting membranes. The chain is U-myrmeciitoxin(01)-Mg7c from Myrmecia gulosa (Red bulldog ant).